The following is a 214-amino-acid chain: MSGLFITFEGGEGAGKSTQIALLASHLRNHGFDPVITREPGGSPGAEAIRHVILSGNAETYGPAMEALLFAAARADHVDQLIRPALAEGRIVLCDRFIDSSRAYQGVTGNLDATYMAAIERIAIDGAMPDLTLVLDICAERGLSRAGKRRGSDTADRFEKEDIAVHEARRQAFLEIARQEPARCKVIDADRSQEKIADEIRSVVDTILTEKGLL.

An ATP-binding site is contributed by 10–17 (GGEGAGKS).

The protein belongs to the thymidylate kinase family.

The enzyme catalyses dTMP + ATP = dTDP + ADP. Functionally, phosphorylation of dTMP to form dTDP in both de novo and salvage pathways of dTTP synthesis. The chain is Thymidylate kinase from Brucella suis biovar 1 (strain 1330).